Consider the following 496-residue polypeptide: Lysine--tRNA ligase (496 aa).

2 residues coordinate Mg(2+): E409 and E416.

This sequence belongs to the class-II aminoacyl-tRNA synthetase family. As to quaternary structure, homodimer. Mg(2+) serves as cofactor.

The protein resides in the cytoplasm. It catalyses the reaction tRNA(Lys) + L-lysine + ATP = L-lysyl-tRNA(Lys) + AMP + diphosphate. The chain is Lysine--tRNA ligase from Streptococcus gordonii (strain Challis / ATCC 35105 / BCRC 15272 / CH1 / DL1 / V288).